A 159-amino-acid chain; its full sequence is Mesogenin-1 (159 aa).

A disordered region spans residues 79-101 (PGQARLPKGTKVRMSAQRRRKAS). Residues 86–100 (KGTKVRMSAQRRRKA) show a composition bias toward basic residues. The 55-residue stretch at 95 to 149 (QRRRKASEREKLRMRTLADALHTLRNYLPPAYSQRGQPLTKIQTLKCTIKYISEL) folds into the bHLH domain.

It localises to the nucleus. Involved in specifying the paraxial, but not dorsal, mesoderm. May regulate the expression of T-box transcription factors required for mesoderm formation and differentiation. This is Mesogenin-1 (MSGN1) from Gallus gallus (Chicken).